The chain runs to 217 residues: Ribonuclease HII (217 aa).

In terms of domain architecture, RNase H type-2 spans 17–207 (KVIYGVDEAG…CVGQSVSGAR (191 aa)). Residues Asp23, Glu24, and Asp116 each contribute to the a divalent metal cation site.

Belongs to the RNase HII family. Mn(2+) serves as cofactor. It depends on Mg(2+) as a cofactor.

The protein resides in the cytoplasm. The catalysed reaction is Endonucleolytic cleavage to 5'-phosphomonoester.. Its function is as follows. Endonuclease that specifically degrades the RNA of RNA-DNA hybrids. The protein is Ribonuclease HII of Nitrosomonas europaea (strain ATCC 19718 / CIP 103999 / KCTC 2705 / NBRC 14298).